A 46-amino-acid chain; its full sequence is MTSQPSKKTYNAPSLVQRGKFARTTAGSQLVYREWVGHSNVIKPGP.

A propeptide spanning residues 1 to 26 is cleaved from the precursor; the sequence is MTSQPSKKTYNAPSLVQRGKFARTTA. A cross-link (isoglutamyl glycine isopeptide (Gly-Glu)) is located at residues 27–34; sequence GSQLVYRE.

Post-translationally, the linear precursor LarA is probably cleaved by the putative peptidase LarD, generating linear 18-residue Lariatin-A or 20-residue Lariatin-B. These linear peptides are probably cross-linked by LarB. Finally, lariatins A and B may be exported by ABC transporter LarE.

Functionally, peptide antibiotic with selective activity against Mycobacterium species (M.smegmatis, MIC=3.13 ug/ml and M.tuberculosis, MIC=0.39 ug/ml). it is plausible that the target of lariatins lies within the cell wall in mycobacteria. Peptide antibiotic with selective activity against Mycobacterium species (M.smegmatis, MIC=6.25 ug/ml). In Rhodococcus jostii, this protein is Lariatin.